We begin with the raw amino-acid sequence, 922 residues long: Coronin-7 (922 aa).

WD repeat units follow at residues 75-115, 124-163, 166-205, and 209-253; these read CHSD…EALP, PEELPVEVLQFHPTVDGVLVSTAGKTVKVWDVAKQQPLTE, AHKDLVQSAVWSRDGAIVGTACKDKQLRIFDPRARTQASQ, and AHEN…SALA. A disordered region spans residues 419 to 467; the sequence is DTDLSEGFSSPSSLMSPSTPSSLGPSLSSTSGIGTSPSQRSLQSLLGPS. Residues 427–456 show a composition bias toward low complexity; that stretch reads SSPSSLMSPSTPSSLGPSLSSTSGIGTSPS. A phosphoserine mark is found at serine 459 and serine 462. A Glycyl lysine isopeptide (Lys-Gly) (interchain with G-Cter in ubiquitin) cross-link involves residue lysine 469. 4 WD repeats span residues 539-581, 589-629, 632-671, and 725-765; these read QNGT…NVLT, GHTE…ERLK, GHQDQIFSLAWSPDGKQLATVCKDGHVRVYEPRSSPLPLQ, and DVAP…PFFL. Residues 858-922 are disordered; that stretch reads GMTPVSQAPR…FEGVDEDEWD (65 aa). A compositionally biased stretch (basic and acidic residues) spans 881–893; it reads LEEKSDQQKKEEL. A Phosphoserine modification is found at serine 912.

This sequence belongs to the WD repeat coronin family. Interacts with clathrin adapter AP1 complex. This interaction takes place at Golgi membranes and not AP1-positive endosomal membranes. Interacts (when ubiquitinated at Lys-469) with EPS15. The membrane-associated form is phosphorylated on tyrosine residues. Post-translationally, ubiquitinated via 'Lys-33'-linked ubiquitin chains by the BCR(KLHL20) E3 ubiquitin ligase complex: 'Lys-33'-linked ubiquitination promotes interaction with EPS15 and facilitates actin polymerization at the trans-Golgi network, thereby facilitating post-Golgi trafficking. Deubiquitinated by ZRANB1/TRABID. In terms of tissue distribution, in the adult, widely expressed with highest levels in brain, thymus and kidney and low levels in skeletal and heart muscle. Not expressed in lung. In the eye, strongly expressed in the outer plexiform layer of the retina. In the intestine, expressed both in terminally differentiated epithelial cells and in crypt epithelium. In the embryo, strongest expression is seen in brain, thymus, intestine, apical epidermal layers of the skin and developing lens fibers of the eye.

Its subcellular location is the golgi apparatus membrane. The protein localises to the golgi apparatus. It is found in the trans-Golgi network. It localises to the cytoplasmic vesicle. The protein resides in the cytoplasm. Its subcellular location is the cytosol. Functionally, F-actin regulator involved in anterograde Golgi to endosome transport: upon ubiquitination via 'Lys-33'-linked ubiquitin chains by the BCR(KLHL20) E3 ubiquitin ligase complex, interacts with EPS15 and localizes to the trans-Golgi network, where it promotes actin polymerization, thereby facilitating post-Golgi trafficking. May play a role in the maintenance of the Golgi apparatus morphology. The sequence is that of Coronin-7 (Coro7) from Mus musculus (Mouse).